Consider the following 141-residue polypeptide: Lutropin subunit beta (141 aa).

A signal peptide spans methionine 1–glycine 21. 6 disulfides stabilise this stretch: cysteine 30-cysteine 78, cysteine 44-cysteine 93, cysteine 47-cysteine 131, cysteine 55-cysteine 109, cysteine 59-cysteine 111, and cysteine 114-cysteine 121. Asparagine 34 is a glycosylation site (N-linked (GlcNAc...) asparagine).

It belongs to the glycoprotein hormones subunit beta family. Heterodimer of a common alpha chain and a unique beta chain which confers biological specificity to thyrotropin, lutropin, follitropin and gonadotropin.

Its subcellular location is the secreted. Functionally, promotes spermatogenesis and ovulation by stimulating the testes and ovaries to synthesize steroids. This is Lutropin subunit beta (LHB) from Monodelphis domestica (Gray short-tailed opossum).